We begin with the raw amino-acid sequence, 158 residues long: NADH-quinone oxidoreductase subunit B (158 aa).

[4Fe-4S] cluster-binding residues include cysteine 37, cysteine 38, cysteine 102, and cysteine 132.

This sequence belongs to the complex I 20 kDa subunit family. As to quaternary structure, NDH-1 is composed of 14 different subunits. Subunits NuoB, C, D, E, F, and G constitute the peripheral sector of the complex. [4Fe-4S] cluster serves as cofactor.

The protein resides in the cell inner membrane. The enzyme catalyses a quinone + NADH + 5 H(+)(in) = a quinol + NAD(+) + 4 H(+)(out). NDH-1 shuttles electrons from NADH, via FMN and iron-sulfur (Fe-S) centers, to quinones in the respiratory chain. Couples the redox reaction to proton translocation (for every two electrons transferred, four hydrogen ions are translocated across the cytoplasmic membrane), and thus conserves the redox energy in a proton gradient. This chain is NADH-quinone oxidoreductase subunit B, found in Aromatoleum aromaticum (strain DSM 19018 / LMG 30748 / EbN1) (Azoarcus sp. (strain EbN1)).